We begin with the raw amino-acid sequence, 303 residues long: MSAVPVSDVHAYLTGLQDNIVQALEQAGGESFRTDTWQRPEGGGGVSRLIEGGQLLERAGVLFSHVHGTRLPPSASAHRPELAGRSWQAMGVSLVLHPRNPYVPTTHMNVRMFVAAARPGHDENDVFWFGGGLDLTPYYAFEDDARHFHQVCRAALDPHGAAYYPQYKRWCDEYFYLKHRQEMRGVGGVFFDDLNEPGFDASFALLRSVGDAFLPAYLPIVQRRRDTPYTQAQRDFQAYRRGRYVEFNLVFDRGTLFGLQSGGRTESILLSMPPMAQWRYDWQPAAGSPEAALAGFLQPRDWA.

Residue Ser93 coordinates substrate. A divalent metal cation contacts are provided by His97 and His107. His107 serves as the catalytic Proton donor. Asn109 to Arg111 serves as a coordination point for substrate. Residues His149 and His179 each coordinate a divalent metal cation. Positions Tyr244–Arg279 are important for dimerization. Gly262–Arg264 contacts substrate.

Belongs to the aerobic coproporphyrinogen-III oxidase family. As to quaternary structure, homodimer. A divalent metal cation is required as a cofactor.

The protein resides in the cytoplasm. It carries out the reaction coproporphyrinogen III + O2 + 2 H(+) = protoporphyrinogen IX + 2 CO2 + 2 H2O. The protein operates within porphyrin-containing compound metabolism; protoporphyrin-IX biosynthesis; protoporphyrinogen-IX from coproporphyrinogen-III (O2 route): step 1/1. Its function is as follows. Involved in the heme biosynthesis. Catalyzes the aerobic oxidative decarboxylation of propionate groups of rings A and B of coproporphyrinogen-III to yield the vinyl groups in protoporphyrinogen-IX. This Bordetella petrii (strain ATCC BAA-461 / DSM 12804 / CCUG 43448) protein is Oxygen-dependent coproporphyrinogen-III oxidase.